A 460-amino-acid polypeptide reads, in one-letter code: UDP-N-acetylmuramoylalanine--D-glutamate ligase (460 aa).

120–126 is a binding site for ATP; it reads GSNGKTT.

This sequence belongs to the MurCDEF family.

It is found in the cytoplasm. It catalyses the reaction UDP-N-acetyl-alpha-D-muramoyl-L-alanine + D-glutamate + ATP = UDP-N-acetyl-alpha-D-muramoyl-L-alanyl-D-glutamate + ADP + phosphate + H(+). The protein operates within cell wall biogenesis; peptidoglycan biosynthesis. Functionally, cell wall formation. Catalyzes the addition of glutamate to the nucleotide precursor UDP-N-acetylmuramoyl-L-alanine (UMA). This chain is UDP-N-acetylmuramoylalanine--D-glutamate ligase, found in Lactobacillus gasseri (strain ATCC 33323 / DSM 20243 / BCRC 14619 / CIP 102991 / JCM 1131 / KCTC 3163 / NCIMB 11718 / NCTC 13722 / AM63).